The primary structure comprises 447 residues: Alpha-1,3-mannosyl-glycoprotein 2-beta-N-acetylglucosaminyltransferase (447 aa).

Over 1 to 6 (MLKKQT) the chain is Cytoplasmic. A helical; Signal-anchor for type II membrane protein membrane pass occupies residues 7–29 (AGLVLWGAIIFVGWNALLLLFFW). The Lumenal portion of the chain corresponds to 30–447 (TRPAPGRLPS…TWTGYDPSWN (418 aa)). Residues Cys115 and Cys145 are joined by a disulfide bond. Residues Arg117, Asp144, His190, and Asp212 each coordinate substrate. Asp213 provides a ligand contact to Mn(2+). Cys239 and Cys305 are joined by a disulfide. The active-site Proton acceptor is the Asp291. Residue Ser322 participates in substrate binding.

It belongs to the glycosyltransferase 13 family. In terms of assembly, interacts with MGAT4D. Interacts with BRI3. Requires Mn(2+) as cofactor. Detected in kidney, liver and brain.

The protein localises to the golgi apparatus membrane. The protein resides in the cytoplasm. Its subcellular location is the perinuclear region. The enzyme catalyses N(4)-(alpha-D-Man-(1-&gt;3)-[alpha-D-Man-(1-&gt;3)-[alpha-D-Man-(1-&gt;6)]-alpha-D-Man-(1-&gt;6)]-beta-D-Man-(1-&gt;4)-beta-D-GlcNAc-(1-&gt;4)-beta-D-GlcNAc)-L-asparaginyl-[protein] (N-glucan mannose isomer 5A1,2) + UDP-N-acetyl-alpha-D-glucosamine = N(4)-{beta-D-GlcNAc-(1-&gt;2)-alpha-D-Man-(1-&gt;3)-[alpha-D-Man-(1-&gt;3)-[alpha-D-Man-(1-&gt;6)]-alpha-D-Man-(1-&gt;6)]-beta-D-Man-(1-&gt;4)-beta-D-GlcNAc-(1-&gt;4)-beta-D-GlcNAc}-L-asparaginyl-[protein] + UDP + H(+). Its pathway is protein modification; protein glycosylation. Functionally, initiates complex N-linked carbohydrate formation. Essential for the conversion of high-mannose to hybrid and complex N-glycans. This Mus musculus (Mouse) protein is Alpha-1,3-mannosyl-glycoprotein 2-beta-N-acetylglucosaminyltransferase (Mgat1).